A 625-amino-acid polypeptide reads, in one-letter code: Mesothelin (625 aa).

The first 35 residues, 1 to 35, serve as a signal peptide directing secretion; the sequence is MALPTAQPLLGSCGSPICSRSFLLLLLSLGWLPLL. Phosphoserine is present on S202. C304 and C328 are joined by a disulfide. Residues N390, N488, and N517 are each glycosylated (N-linked (GlcNAc...) asparagine). Residue S600 is the site of GPI-anchor amidated serine attachment. The propeptide at 601 to 625 is removed in mature form; the sequence is SGAPLLGPGFVFAWIPALLSALRLS.

The protein belongs to the mesothelin family. In terms of assembly, interacts with MUC16. Proteolytically cleaved by a furin-like convertase to generate megakaryocyte-potentiating factor (MPF), and the cleaved form of mesothelin. Specifically expressed in lung. Overexpressed in hereditary renal carcinoma developed by Eker rats.

Its subcellular location is the cell membrane. The protein resides in the golgi apparatus. It is found in the secreted. In terms of biological role, membrane-anchored forms may play a role in cellular adhesion. Megakaryocyte-potentiating factor (MPF) may potentiate megakaryocyte colony formation. The chain is Mesothelin (Msln) from Rattus norvegicus (Rat).